Reading from the N-terminus, the 469-residue chain is Putative dipeptidase SSP1012 (469 aa).

Position 84 (histidine 84) interacts with Zn(2+). Aspartate 86 is an active-site residue. A Zn(2+)-binding site is contributed by aspartate 115. The active-site Proton acceptor is the glutamate 149. Residues glutamate 150, aspartate 173, and histidine 440 each coordinate Zn(2+).

Belongs to the peptidase M20A family. It depends on Zn(2+) as a cofactor.

This is Putative dipeptidase SSP1012 from Staphylococcus saprophyticus subsp. saprophyticus (strain ATCC 15305 / DSM 20229 / NCIMB 8711 / NCTC 7292 / S-41).